A 268-amino-acid polypeptide reads, in one-letter code: Phosphonates import ATP-binding protein PhnC (268 aa).

Residues 11 to 254 (LHAEAVTKRF…EVMAIYQRAE (244 aa)) form the ABC transporter domain. 43 to 50 (GLSGSGKS) provides a ligand contact to ATP.

The protein belongs to the ABC transporter superfamily. Phosphonates importer (TC 3.A.1.9.1) family. As to quaternary structure, the complex is composed of two ATP-binding proteins (PhnC), two transmembrane proteins (PhnE) and a solute-binding protein (PhnD).

It localises to the cell membrane. It catalyses the reaction phosphonate(out) + ATP + H2O = phosphonate(in) + ADP + phosphate + H(+). In terms of biological role, part of the ABC transporter complex PhnCDE involved in phosphonates import. Responsible for energy coupling to the transport system. The chain is Phosphonates import ATP-binding protein PhnC from Nocardia farcinica (strain IFM 10152).